A 297-amino-acid chain; its full sequence is Phosphoribosylaminoimidazole-succinocarboxamide synthase (297 aa).

Belongs to the SAICAR synthetase family.

It carries out the reaction 5-amino-1-(5-phospho-D-ribosyl)imidazole-4-carboxylate + L-aspartate + ATP = (2S)-2-[5-amino-1-(5-phospho-beta-D-ribosyl)imidazole-4-carboxamido]succinate + ADP + phosphate + 2 H(+). It functions in the pathway purine metabolism; IMP biosynthesis via de novo pathway; 5-amino-1-(5-phospho-D-ribosyl)imidazole-4-carboxamide from 5-amino-1-(5-phospho-D-ribosyl)imidazole-4-carboxylate: step 1/2. The chain is Phosphoribosylaminoimidazole-succinocarboxamide synthase from Corynebacterium diphtheriae (strain ATCC 700971 / NCTC 13129 / Biotype gravis).